We begin with the raw amino-acid sequence, 444 residues long: Argininosuccinate synthase (444 aa).

Residues 17–25 (AFSGGLDTS) and A43 each bind ATP. Residue Y99 coordinates L-citrulline. Residues G129 and T131 each coordinate ATP. The L-aspartate site is built by T131, N135, and D136. N135 provides a ligand contact to L-citrulline. Residue D136 coordinates ATP. L-citrulline is bound by residues R139 and S192. Residue D194 coordinates ATP. 3 residues coordinate L-citrulline: T201, E203, and E280.

It belongs to the argininosuccinate synthase family. Type 2 subfamily. In terms of assembly, homotetramer.

The protein resides in the cytoplasm. It carries out the reaction L-citrulline + L-aspartate + ATP = 2-(N(omega)-L-arginino)succinate + AMP + diphosphate + H(+). Its pathway is amino-acid biosynthesis; L-arginine biosynthesis; L-arginine from L-ornithine and carbamoyl phosphate: step 2/3. This Burkholderia lata (strain ATCC 17760 / DSM 23089 / LMG 22485 / NCIMB 9086 / R18194 / 383) protein is Argininosuccinate synthase.